Here is a 725-residue protein sequence, read N- to C-terminus: Phosphatase and actin regulator 4A (725 aa).

Residues Met1 to Pro12 are compositionally biased toward polar residues. Residues Met1 to Trp597 are disordered. Positions Lys55–Thr64 are enriched in basic residues. Basic and acidic residues-rich tracts occupy residues Ser65–Pro100, Gly124–Lys147, and Lys155–Thr164. An RPEL 1 repeat occupies Leu75–Pro100. The span at Met166 to Gln177 shows a compositional bias: polar residues. A compositionally biased stretch (low complexity) spans Val212–Pro221. A compositionally biased stretch (pro residues) spans Ala222–Arg235. Low complexity-rich tracts occupy residues Pro265–His276 and Pro292–Gln313. Polar residues predominate over residues Thr359–Asp368. The span at Pro374 to Val384 shows a compositional bias: pro residues. The segment covering Pro385 to Asp401 has biased composition (low complexity). The segment covering Pro402–Pro417 has biased composition (pro residues). Positions Gln497–Val510 are enriched in basic and acidic residues. Composition is skewed to acidic residues over residues Ala522–Ser536 and Asp545–Asp554. The segment covering Lys567–Glu585 has biased composition (basic and acidic residues). 2 RPEL repeats span residues Thr606–Asn631 and Arg644–Glu669.

Belongs to the phosphatase and actin regulator family. In terms of assembly, binds ppp1ca and actin.

The protein resides in the cytoplasm. It localises to the cell projection. It is found in the lamellipodium. Functionally, regulator of protein phosphatase 1 (PP1) required for neural tube and optic fissure closure, and enteric neural crest cell (ENCCs) migration during development. Acts as an activator of PP1. During neural tube closure, localizes to the ventral neural tube and activates PP1, leading to down-regulate cell proliferation within cranial neural tissue and the neural retina. Also acts as a regulator of migration of enteric neural crest cells (ENCCs) by activating PP1, leading to repression of the integrin signaling through the rho/rock pathway. The polypeptide is Phosphatase and actin regulator 4A (phactr4a) (Danio rerio (Zebrafish)).